The sequence spans 30 residues: V-type proton ATPase catalytic subunit A isoform 1 (30 aa).

It belongs to the ATPase alpha/beta chains family. As to quaternary structure, V-ATPase is a heteromultimeric enzyme composed of a peripheral catalytic V1 complex (main components: subunits A, B, C, D, E, and F) attached to an integral membrane V0 proton pore complex (main component: the proteolipid protein).

It catalyses the reaction ATP + H2O + 4 H(+)(in) = ADP + phosphate + 5 H(+)(out). Its function is as follows. Catalytic subunit of the peripheral V1 complex of vacuolar ATPase. V-ATPase vacuolar ATPase is responsible for acidifying a variety of intracellular compartments in eukaryotic cells. The sequence is that of V-type proton ATPase catalytic subunit A isoform 1 from Psilotum nudum (Whisk fern).